The chain runs to 511 residues: Phosphomethylpyrimidine synthase (511 aa).

Residues asparagine 127, methionine 156, tyrosine 185, histidine 221, 241–243, 282–285, and glutamate 321 each bind substrate; these read SRG and DGLR. Histidine 325 is a Zn(2+) binding site. Tyrosine 348 contacts substrate. Histidine 389 contributes to the Zn(2+) binding site. [4Fe-4S] cluster contacts are provided by cysteine 469, cysteine 472, and cysteine 477. Residues 492–511 are disordered; the sequence is KGMEEKSEVTICNRKKESGK.

The protein belongs to the ThiC family. It depends on [4Fe-4S] cluster as a cofactor.

It catalyses the reaction 5-amino-1-(5-phospho-beta-D-ribosyl)imidazole + S-adenosyl-L-methionine = 4-amino-2-methyl-5-(phosphooxymethyl)pyrimidine + CO + 5'-deoxyadenosine + formate + L-methionine + 3 H(+). Its pathway is cofactor biosynthesis; thiamine diphosphate biosynthesis. Catalyzes the synthesis of the hydroxymethylpyrimidine phosphate (HMP-P) moiety of thiamine from aminoimidazole ribotide (AIR) in a radical S-adenosyl-L-methionine (SAM)-dependent reaction. The sequence is that of Phosphomethylpyrimidine synthase from Leptospira borgpetersenii serovar Hardjo-bovis (strain JB197).